A 110-amino-acid polypeptide reads, in one-letter code: UPF0060 membrane protein Rpic_4131 (110 aa).

4 helical membrane-spanning segments follow: residues V8–L28, P33–L53, Y65–L85, and W88–Q108.

Belongs to the UPF0060 family.

The protein resides in the cell inner membrane. This is UPF0060 membrane protein Rpic_4131 from Ralstonia pickettii (strain 12J).